The chain runs to 414 residues: V-set and immunoglobulin domain-containing protein 8 (414 aa).

Residues 1–21 (MRVGGAFHLLLVCLSPALLSA) form the signal peptide. Ig-like V-type domains follow at residues 22 to 141 (VRIN…VIVT) and 146 to 257 (PAVP…VKVS). The Extracellular portion of the chain corresponds to 22 to 263 (VRINGDGQEV…VKVSDSRRIG (242 aa)). 2 disulfide bridges follow: C44–C126 and C167–C239. A helical membrane pass occupies residues 264–284 (VIIGIVLGSLLALGCLAVGIW). Over 285-414 (GLVCCCCGGS…PVQCKNGLLV (130 aa)) the chain is Cytoplasmic.

It is found in the membrane. This Homo sapiens (Human) protein is V-set and immunoglobulin domain-containing protein 8.